The primary structure comprises 100 residues: Small ribosomal subunit protein uS14c (100 aa).

This sequence belongs to the universal ribosomal protein uS14 family. As to quaternary structure, part of the 30S ribosomal subunit.

The protein resides in the plastid. The protein localises to the cyanelle. Its function is as follows. Binds 16S rRNA, required for the assembly of 30S particles. The chain is Small ribosomal subunit protein uS14c from Cyanophora paradoxa.